The chain runs to 257 residues: Glutamate racemase (257 aa).

Substrate-binding positions include 12 to 13 (DS) and 44 to 45 (YG). The active-site Proton donor/acceptor is Cys-75. A substrate-binding site is contributed by 76–77 (NT). Cys-176 serves as the catalytic Proton donor/acceptor. 177–178 (TH) contributes to the substrate binding site.

This sequence belongs to the aspartate/glutamate racemases family.

The catalysed reaction is L-glutamate = D-glutamate. The protein operates within cell wall biogenesis; peptidoglycan biosynthesis. In terms of biological role, provides the (R)-glutamate required for cell wall biosynthesis. The sequence is that of Glutamate racemase from Thermus thermophilus (strain ATCC BAA-163 / DSM 7039 / HB27).